Here is a 213-residue protein sequence, read N- to C-terminus: Adenylate kinase (213 aa).

10–15 contacts ATP; sequence GCGKGT. Residues 30-59 form an NMP region; that stretch reads STGDLMRKEISLNTRLGLKCQEYMNAGKYV. AMP contacts are provided by residues Thr31, Arg36, 57-59, 83-86, and Gln90; these read KYV and GYPR. Residues 124–161 form an LID region; the sequence is NRLVCPLCKASFNLETRKPKQEGLCDFDNTKLVKRSDD. Arg125 contributes to the ATP binding site. Zn(2+) is bound by residues Cys128 and Cys131. ATP is bound at residue 134–135; the sequence is SF. Zn(2+) contacts are provided by Cys148 and Asp151. The AMP site is built by Arg158 and Arg169. ATP is bound at residue Asp197.

Belongs to the adenylate kinase family. In terms of assembly, monomer.

Its subcellular location is the cytoplasm. It carries out the reaction AMP + ATP = 2 ADP. The protein operates within purine metabolism; AMP biosynthesis via salvage pathway; AMP from ADP: step 1/1. Its function is as follows. Catalyzes the reversible transfer of the terminal phosphate group between ATP and AMP. Plays an important role in cellular energy homeostasis and in adenine nucleotide metabolism. This Mycoplasma mycoides subsp. mycoides SC (strain CCUG 32753 / NCTC 10114 / PG1) protein is Adenylate kinase.